The chain runs to 251 residues: 3-isopropylmalate dehydratase small subunit 1 (251 aa).

The transit peptide at 1-59 directs the protein to the chloroplast; sequence MAASLQSANPTLSRTLASPNKPSSFATFRSPFLRFNSTSVASNFKPLVSREASSSFVTR.

It belongs to the LeuD family. As to quaternary structure, heterodimer of the large LEUC/IIL1 subunit and the small LEUD (SSU1, SSU2 or SSU3) subunits. Expressed at low levels in roots, root tips, at the basis of the hypocotyls, and in emerging leaves. In young seedlings, expressed in cotyledon epidermal cells. In hypocotyls, expressed in peripheral cells. In seedling roots, expressed in the epidermis, including root hairs, and throughout the cortex. In rosette leaves, expressed in the upper and lower epidermis. In roots of adult plants, expressed in the root tips and cortex of the mature root enclosing the stele. In flowering stalks, expressed in the epidermis. Expressed in the carpel epidermis.

The protein resides in the plastid. Its subcellular location is the chloroplast stroma. The catalysed reaction is (2R,3S)-3-isopropylmalate = (2S)-2-isopropylmalate. Its pathway is amino-acid biosynthesis; L-leucine biosynthesis; L-leucine from 3-methyl-2-oxobutanoate: step 2/4. Catalyzes the isomerization between 2-isopropylmalate and 3-isopropylmalate, via the formation of 2-isopropylmaleate. Plays an essential role in leucine biosynthesis. Functions in both the biosynthesis of leucine, and in the methionine chain elongation pathway of aliphatic glucosinolate formation. Plays an essential role in female gametophyte development. In Arabidopsis thaliana (Mouse-ear cress), this protein is 3-isopropylmalate dehydratase small subunit 1.